The primary structure comprises 196 residues: MGTSEEELKHIVIDLGCGPFFLGINDKHFPGFLNKQSNACAIVNTASRETGGVHWIAMGWHPPSNFYLFDPFGFSDKKLLQIYQFEYNALLKRSAITSSPDRCVQLFQNNESVQSPHSAACGLYCCMFLHAFANWPAHPFDNPTMDQLVGVPNNMLEAPRAQSIFKQNQETLYSFLHYNSSFFRRYENKLRKQTDP.

Residues His54, Asp70, and Cys121 contribute to the active site.

This sequence belongs to the peptidase C5 family. In terms of assembly, interacts with protease cofactor pVI-C; this interaction is necessary for protease activation.

Its subcellular location is the virion. The protein resides in the host nucleus. It catalyses the reaction Cleaves proteins of the adenovirus and its host cell at two consensus sites: -Yaa-Xaa-Gly-Gly-|-Xaa- and -Yaa-Xaa-Gly-Xaa-|-Gly- (in which Yaa is Met, Ile or Leu, and Xaa is any amino acid).. Requires DNA and protease cofactor for maximal activation. Inside nascent virions, becomes partially activated by binding to the viral DNA, allowing it to cleave the cofactor that binds to the protease and fully activates it. Actin, like the viral protease cofactor, seems to act as a cofactor in the cleavage of cytokeratin 18 and of actin itself. Functionally, cleaves viral precursor proteins (pTP, pIIIa, pVI, pVII, pVIII, and pX) inside newly assembled particles giving rise to mature virions. Protease complexed to its cofactor slides along the viral DNA to specifically locate and cleave the viral precursors. Mature virions have a weakened organization compared to the unmature virions, thereby facilitating subsequent uncoating. Without maturation, the particle lacks infectivity and is unable to uncoat. Late in adenovirus infection, in the cytoplasm, may participate in the cytoskeleton destruction. Cleaves host cell cytoskeletal keratins K7 and K18. This chain is Protease, found in Bos taurus (Bovine).